We begin with the raw amino-acid sequence, 525 residues long: Keratin, type I cytoskeletal 24 (525 aa).

Positions 1-30 are disordered; sequence MSCSSRASSSRAGGSSSARVSAGGSSFSSG. Residues 1 to 139 form a head region; that stretch reads MSCSSRASSS…VGDGGLFSGG (139 aa). Residues 140–175 are coil 1A; the sequence is EKQTMQNLNDRLANYLDKVRALEEANTDLENKIKEW. The region spanning 140 to 456 is the IF rod domain; that stretch reads EKQTMQNLND…RLLDGEGGGS (317 aa). The linker 1 stretch occupies residues 176–198; sequence YDKYGPGSGDGGSGRDYSKYYSI. The segment at 199–290 is coil 1B; sequence IEDLRNQIIA…KNHEEEMKNM (92 aa). The segment at 291–313 is linker 12; the sequence is QGSSGGEVTVEMNAAPGTDLTKL. The segment at 314–452 is coil 2; it reads LNDMRAQYEE…ETYRRLLDGE (139 aa). The tail stretch occupies residues 453–525; that stretch reads GGGSSFAEFG…VSSISEVKVK (73 aa). The interval 459 to 497 is disordered; sequence AEFGGRNSGSVNMGSRDLVSGDSRSGSCSGQGRDSSKTR. Over residues 480-491 the composition is skewed to polar residues; sequence DSRSGSCSGQGR.

The protein belongs to the intermediate filament family. Heterotetramer of two type I and two type II keratins. As to expression, highly expressed in keratinocytes, placenta, colon and spleen. Expressed at lower level in thymus and testis.

This Homo sapiens (Human) protein is Keratin, type I cytoskeletal 24 (KRT24).